We begin with the raw amino-acid sequence, 212 residues long: Acyl-homoserine-lactone synthase (212 aa).

Belongs to the autoinducer synthase family.

It carries out the reaction a fatty acyl-[ACP] + S-adenosyl-L-methionine = an N-acyl-L-homoserine lactone + S-methyl-5'-thioadenosine + holo-[ACP] + H(+). Required for the synthesis of autoinducer molecules which bind to RaiR and that are involved in the restriction of nodule number. This is Acyl-homoserine-lactone synthase (raiI) from Rhizobium etli.